The primary structure comprises 385 residues: 1-deoxy-D-xylulose 5-phosphate reductoisomerase (385 aa).

6 residues coordinate NADPH: T13, G14, S15, I16, N40, and N122. K123 serves as a coordination point for 1-deoxy-D-xylulose 5-phosphate. An NADPH-binding site is contributed by E124. D148 lines the Mn(2+) pocket. Positions 149, 150, 177, and 200 each coordinate 1-deoxy-D-xylulose 5-phosphate. E150 is a binding site for Mn(2+). NADPH is bound at residue G206. Residues S213, N218, K219, and E222 each contribute to the 1-deoxy-D-xylulose 5-phosphate site. E222 lines the Mn(2+) pocket.

This sequence belongs to the DXR family. It depends on Mg(2+) as a cofactor. Mn(2+) serves as cofactor.

The catalysed reaction is 2-C-methyl-D-erythritol 4-phosphate + NADP(+) = 1-deoxy-D-xylulose 5-phosphate + NADPH + H(+). It participates in isoprenoid biosynthesis; isopentenyl diphosphate biosynthesis via DXP pathway; isopentenyl diphosphate from 1-deoxy-D-xylulose 5-phosphate: step 1/6. Catalyzes the NADPH-dependent rearrangement and reduction of 1-deoxy-D-xylulose-5-phosphate (DXP) to 2-C-methyl-D-erythritol 4-phosphate (MEP). This Francisella tularensis subsp. holarctica (strain FTNF002-00 / FTA) protein is 1-deoxy-D-xylulose 5-phosphate reductoisomerase.